We begin with the raw amino-acid sequence, 557 residues long: High-affinity hexose transporter ght4 (557 aa).

Residues 1 to 9 lie on the Cytoplasmic side of the membrane; sequence MGRTLTSVL. Residues 10-30 traverse the membrane as a helical segment; the sequence is VVFISMAGWLGGADTGSISGI. Topologically, residues 31–58 are extracellular; the sequence is LGMRDFQSRFADRYNPITNSYSYSAWRQ. A helical transmembrane segment spans residues 59–79; it reads ALLTGTVNAGCLFGAMLSSPF. Residues 80–87 are Cytoplasmic-facing; that stretch reads TEAIGKKY. The chain crosses the membrane as a helical span at residues 88 to 108; it reads SIAFFSGCYIIGQILLVTAVP. The Extracellular segment spans residues 109 to 112; that stretch reads SWVQ. A helical membrane pass occupies residues 113-133; sequence IMVGKLFTGLTIGALSVLSPG. Over 134–144 the chain is Cytoplasmic; sequence YQSEVAPPQIR. A helical transmembrane segment spans residues 145-165; the sequence is GAVVSTYQLFQTCGTLIAACI. The Extracellular portion of the chain corresponds to 166–179; sequence NMGTHKLRKTASWR. Residues 180–200 traverse the membrane as a helical segment; sequence TSFGINILWGIFLMVGVLFLP. The Cytoplasmic segment spans residues 201–266; the sequence is ESPRYLIYKG…VFGKEVRYRT (66 aa). A helical transmembrane segment spans residues 267–285; sequence VLGFLTMLLRELIGNNYYF. Over 286–301 the chain is Extracellular; sequence YYATQVFKGTGMTDIF. Residues 302 to 322 form a helical membrane-spanning segment; sequence LPAVILGAINFGTTFGALYTI. Over 323–328 the chain is Cytoplasmic; that stretch reads DNLGRR. The helical transmembrane segment at 329–349 threads the bilayer; the sequence is NPLIFGAAFQSICFFIYAAVG. The Extracellular portion of the chain corresponds to 350–363; sequence DRKLIYKNGTSDHR. Asparagine 357 is a glycosylation site (N-linked (GlcNAc...) asparagine). The helical transmembrane segment at 364–384 threads the bilayer; the sequence is AGAVMIVFSCLFLFSYCCSWG. Residues 385–404 are Cytoplasmic-facing; it reads PMGWVIVGETFPIRYRSKCA. Residues 405-425 traverse the membrane as a helical segment; it reads AVATSGNWLGNFMVSFFTPFI. Over 426–432 the chain is Extracellular; sequence SNSIGFK. Residues 433–453 form a helical membrane-spanning segment; sequence LGYIYACINMTSAFQIFLMAK. The Cytoplasmic portion of the chain corresponds to 454-557; that stretch reads ETKGLTLEEV…VSEESHPTWV (104 aa). A compositionally biased stretch (basic and acidic residues) spans 492–514; sequence KEEEKREREKSKGYRGQEERFIE. The segment at 492–557 is disordered; sequence KEEEKREREK…VSEESHPTWV (66 aa). Positions 524 to 536 are enriched in low complexity; the sequence is SSASSESFASAGA. Positions 547 to 557 are enriched in basic and acidic residues; sequence NVSEESHPTWV.

This sequence belongs to the major facilitator superfamily. Sugar transporter (TC 2.A.1.1) family.

It localises to the membrane. The sequence is that of High-affinity hexose transporter ght4 (ght4) from Schizosaccharomyces pombe (strain 972 / ATCC 24843) (Fission yeast).